We begin with the raw amino-acid sequence, 88 residues long: Sm-like protein LSM5 (88 aa).

An N-acetylalanine modification is found at alanine 2. The region spanning leucine 9 to proline 84 is the Sm domain.

This sequence belongs to the snRNP Sm proteins family. As to quaternary structure, component of the heptameric LSM1-LSM7 complex that forms a seven-membered ring structure with a donut shape. The LSM subunits are arranged in the order LSM1, LSM2, LSM3, LSM6, LSM5, LSM7 and LSM4. Component of the heptameric LSM2-LSM8 complex that forms a seven-membered ring structure with a donut shape. The LSM subunits are arranged in the order LSM8, LSM2, LSM3, LSM6, LSM5, LSM7 and LSM4. LSM2 subunit interacts only with its two neighboring subunits, LSM6A or LSM6B and LSM7. Expressed in roots, leaves, stems, flowers and siliques.

Its subcellular location is the cytoplasm. The protein resides in the nucleus. Functionally, component of LSM protein complexes, which are involved in RNA processing. Component of the cytoplasmic LSM1-LSM7 complex which is involved in mRNA degradation by promoting decapping and leading to accurate 5'-3' mRNA decay. The cytoplasmic LSM1-LSM7 complex regulates developmental gene expression by the decapping of specific development-related transcripts. Component of the nuclear LSM2-LSM8 complex which is involved splicing nuclear mRNAs. LSM2-LSM8 binds directly to the U6 small nuclear RNAs (snRNAs) and is essential for accurate splicing of selected development-related mRNAs through the stabilization of the spliceosomal U6 snRNA. Plays a critical role in the regulation of development-related gene expression. Involved in the control of plant sensitivity to abscisic acid (ABA) and drought. Functions with ABH1 as negative regulator of ABA signaling in guard cells. Required for regulation of splicing efficiency of many stress-responsive genes under stress conditions. The sequence is that of Sm-like protein LSM5 from Arabidopsis thaliana (Mouse-ear cress).